The following is a 228-amino-acid chain: Ribulose-phosphate 3-epimerase, cytoplasmic isoform (228 aa).

Residue Ser12 participates in substrate binding. A divalent metal cation contacts are provided by His37, Asp39, and His70. The active-site Proton acceptor is the Asp39. Substrate contacts are provided by residues His70, 150 to 153 (GFGG), 179 to 181 (DGG), and 201 to 202 (GS). Residue Asp179 participates in a divalent metal cation binding. Asp179 acts as the Proton donor in catalysis.

Belongs to the ribulose-phosphate 3-epimerase family. Homodimer. Co(2+) is required as a cofactor. The cofactor is Fe(2+). Requires Mn(2+) as cofactor. It depends on Zn(2+) as a cofactor. As to expression, predominantly accumulates in roots and seedlings.

It localises to the cytoplasm. The catalysed reaction is D-ribulose 5-phosphate = D-xylulose 5-phosphate. Its pathway is carbohydrate degradation; pentose phosphate pathway; D-xylulose 5-phosphate from D-ribulose 5-phosphate (non-oxidative stage): step 1/1. In terms of biological role, catalyzes the reversible epimerization of D-ribulose 5-phosphate to D-xylulose 5-phosphate. This is Ribulose-phosphate 3-epimerase, cytoplasmic isoform from Oryza sativa subsp. japonica (Rice).